A 603-amino-acid polypeptide reads, in one-letter code: MATITGSSMPTRTACFNYQGRSAESKLNLPQIHFNNNQAFPVLGLRSLNKLHVRTARATSGSSDTSEKSLGKIVCGMSLVFVGAEVGPWSKTGGLGDVLGGLPPVLAGNGHRVMTVSPRYDQYKDAWDTNVLVEVKVGDKIETVRFFHCYKRGVDRVFVDHPLFLERVWGKTGSKLYGPKTGIDYRDNQLRFSLLCQAALEAPRVLNLNSSKYFSGPYGEDVIFVANDWHSALIPCYLKSMYKSRGLYKNAKVAFCIHNIAYQGRNAFSDFSLLNLPDEFRSSFDFIDGYNKPCEGKKINWMKAGILESDQVFTVSPHYAKELISGEDRGVELDNIIRSTGIIGIVNGMDNREWSPQTDRYIDVHYNETTVTEAKPLLKGTLQAEIGLPVDSSIPLIGFIGRLEEQKGSDILVEAIAKFADENVQIVVLGTGKKIMEKQIEVLEEKYPGKAIGITKFNSPLAHKIIAGADFIVIPSRFEPCGLVQLHAMPYGTVPIVSSTGGLVDTVKEGYTGFHAGPFDVECEDVDPDDVDKLAATVKRALKTYGTQAMKQIILNCMAQNFSWKKPAKLWEKALLNLEVTGNVAGIDGDEIAPLAKENVATP.

A chloroplast-targeting transit peptide spans 1-75 (MATITGSSMP…SEKSLGKIVC (75 aa)). ADP-alpha-D-glucose is bound at residue Lys-91.

Belongs to the glycosyltransferase 1 family. Bacterial/plant glycogen synthase subfamily. Expressed in pods and leaves. No expression in flowers or stipules.

The protein localises to the plastid. Its subcellular location is the chloroplast. It is found in the amyloplast. It carries out the reaction an NDP-alpha-D-glucose + [(1-&gt;4)-alpha-D-glucosyl](n) = [(1-&gt;4)-alpha-D-glucosyl](n+1) + a ribonucleoside 5'-diphosphate + H(+). It functions in the pathway glycan biosynthesis; starch biosynthesis. May be responsible for the synthesis of amylose. The polypeptide is Granule-bound starch synthase 1, chloroplastic/amyloplastic (Pisum sativum (Garden pea)).